An 813-amino-acid chain; its full sequence is Palmitoyltransferase AKR1 (813 aa).

Positions 1-83 (MAKKKSKSKS…PVTTSNETDP (83 aa)) are disordered. Topologically, residues 1–387 (MAKKKSKSKS…KPWVSAKLGK (387 aa)) are cytoplasmic. Over residues 9–24 (KSSSPKPKVSSTAAKP) the composition is skewed to low complexity. Residues 28–46 (DNQQNIENVQDSPSALQQQ) show a composition bias toward polar residues. The segment covering 47–78 (SATAEESENTATTATPSEGTTATTESSPVTTS) has biased composition (low complexity). 6 ANK repeats span residues 133–162 (PTLA…VLVN), 167–196 (DEIT…NPNQ), 201–231 (LKAS…DPNL), 235–264 (QTYN…STDS), 276–305 (SNRT…DVSK), and 309–338 (SLFI…DIYF). A helical membrane pass occupies residues 388 to 408 (IITFLTPYFLLPLSFNVLSMG). Over 409 to 412 (GDQG) the chain is Lumenal. A helical transmembrane segment spans residues 413 to 433 (GFIIPKLILAIGILGGGIYLL). Over 434–452 (NKLIISQYIFDDKKLAKSP) the chain is Cytoplasmic. The chain crosses the membrane as a helical span at residues 453–473 (ILAGVFSATAFWSVLVWLYNI). The Lumenal portion of the chain corresponds to 474-485 (LPTTFIHNFFAN). A helical membrane pass occupies residues 486–506 (VIMAILIAIFTWSFFKAMFIN). Residues 507–579 (PGFVPTPADN…YNDIGVRNHK (73 aa)) lie on the Cytoplasmic side of the membrane. Residues 536–586 (HFCVNSFVRKPLRSRYSKHNKRLIARFDHSCPWVYNDIGVRNHKIFITFVY) form the DHHC domain. Cys566 serves as the catalytic S-palmitoyl cysteine intermediate. A helical transmembrane segment spans residues 580–600 (IFITFVYSLNMAIFVFLYLSL). Residues 601 to 642 (QYFDKVKDQYDSDDEGEGEGFVCSILGDDMCYGYKNHHFHFN) lie on the Lumenal side of the membrane. Residues 643-663 (VFMWDLFQCVWVSFLCIVQTF) traverse the membrane as a helical segment. Topologically, residues 664 to 813 (QILKGLTTWE…VDYYTLYSYH (150 aa)) are cytoplasmic.

Belongs to the DHHC palmitoyltransferase family. AKR/ZDHHC17 subfamily.

The protein localises to the early endosome membrane. It localises to the golgi apparatus membrane. It catalyses the reaction L-cysteinyl-[protein] + hexadecanoyl-CoA = S-hexadecanoyl-L-cysteinyl-[protein] + CoA. Functionally, palmitoyltransferase specific for casein kinase 1. This chain is Palmitoyltransferase AKR1 (AKR1), found in Candida albicans (strain SC5314 / ATCC MYA-2876) (Yeast).